The following is a 318-amino-acid chain: NADH-ubiquinone oxidoreductase chain 1 (318 aa).

8 helical membrane-spanning segments follow: residues 2–22 (FMLN…FLTL), 68–88 (ITMF…MWIP), 100–120 (LGVL…LWSG), 147–167 (AIIL…TLII), 171–191 (YIWL…STLA), 217–237 (GGPF…MNAL), 254–273 (LYTT…FLWI), and 294–314 (LPLT…MAGI).

It belongs to the complex I subunit 1 family.

The protein resides in the mitochondrion inner membrane. The catalysed reaction is a ubiquinone + NADH + 5 H(+)(in) = a ubiquinol + NAD(+) + 4 H(+)(out). In terms of biological role, core subunit of the mitochondrial membrane respiratory chain NADH dehydrogenase (Complex I) that is believed to belong to the minimal assembly required for catalysis. Complex I functions in the transfer of electrons from NADH to the respiratory chain. The immediate electron acceptor for the enzyme is believed to be ubiquinone. The protein is NADH-ubiquinone oxidoreductase chain 1 (MT-ND1) of Hsunycteris thomasi (Thomas's nectar bat).